A 225-amino-acid polypeptide reads, in one-letter code: Probable iron export ATP-binding protein FetA (225 aa).

The region spanning 8 to 225 (LQLQNVGYLA…EMQEARYELA (218 aa)) is the ABC transporter domain. 40-47 (GPSGCGKS) provides a ligand contact to ATP.

It belongs to the ABC transporter superfamily. The complex is composed of two ATP-binding proteins (FetA) and two transmembrane proteins (FetB).

The protein localises to the cell inner membrane. Its function is as follows. Part of the ABC transporter complex FetAB, which is probably involved in iron export and enhances resistance to H(2)O(2)-mediated oxidative stress. Probably responsible for energy coupling to the transport system. This is Probable iron export ATP-binding protein FetA (fetA) from Escherichia coli (strain K12).